Reading from the N-terminus, the 542-residue chain is Chitinase 2 (542 aa).

Positions 1–22 are cleaved as a signal peptide; that stretch reads MLTRTFLGMAISAFLASTGVQA. The region spanning 29–314 is the GH18 domain; that stretch reads PNVMYYWGQN…SQLYSLVHSG (286 aa). The active-site Proton donor is the glutamate 166. The segment at 312–356 is disordered; the sequence is HSGGSTPPPPSSSSATKTTTKTTATSTKTTTTTAPTATSTPGSCP. Residues 323 to 354 are compositionally biased toward low complexity; the sequence is SSSATKTTTKTTATSTKTTTTTAPTATSTPGS. The segment at 355 to 406 is chitin-binding, high affinity; the sequence is CPVANQPCSTQNQYACTADGKYAVCDHGKWVASSCPSNTVCIPTTDGASIYC. The propeptide occupies 447–542; the sequence is AQLAVTSTDK…APSTSAWNFK (96 aa).

It belongs to the glycosyl hydrolase 18 family. Chitinase class III subfamily. As to quaternary structure, monomer. Post-translationally, O-glycosylated.

It localises to the secreted. The enzyme catalyses Random endo-hydrolysis of N-acetyl-beta-D-glucosaminide (1-&gt;4)-beta-linkages in chitin and chitodextrins.. Functionally, probably involved in the apical growth and branching of fungal hyphae. The sequence is that of Chitinase 2 (CHI2) from Rhizopus oligosporus (Rhizopus microsporus var. oligosporus).